Reading from the N-terminus, the 518-residue chain is Protease Do-like 4, mitochondrial (518 aa).

Residues 1-23 constitute a mitochondrion transit peptide; the sequence is MLFRFLQTLARFCRFLLISVLGF. The interval 98 to 262 is serine protease; sequence ESGGSGFVIS…IPTPVIKHFL (165 aa). Catalysis depends on charge relay system residues His116, Asp147, and Ser225. Positions 278 to 358 constitute a PDZ domain; it reads DISYQLMENS…HFVSMKKLDE (81 aa).

The protein belongs to the peptidase S1C family.

It localises to the mitochondrion membrane. Functionally, putative serine protease. The sequence is that of Protease Do-like 4, mitochondrial (DEGP4) from Arabidopsis thaliana (Mouse-ear cress).